A 113-amino-acid polypeptide reads, in one-letter code: ATP synthase epsilon chain (113 aa).

This sequence belongs to the ATPase epsilon chain family. F-type ATPases have 2 components, CF(1) - the catalytic core - and CF(0) - the membrane proton channel. CF(1) has five subunits: alpha(3), beta(3), gamma(1), delta(1), epsilon(1). CF(0) has three main subunits: a, b and c.

The protein resides in the cell membrane. Functionally, produces ATP from ADP in the presence of a proton gradient across the membrane. The protein is ATP synthase epsilon chain of Wolbachia pipientis subsp. Culex pipiens (strain wPip).